The following is a 553-amino-acid chain: MFCIQCEQTISTPTTKGCSYTMGMCGKTAEVSDLQDVLIYLLQGVSDYAVKARSVGIVDQAIDAYVCQALFSTLTNVNFDAARIIAFINEAQQNRDSLKSRYEAACLLAGKAPEAATGPAALILTADKAELLAWAPNAAVNRNYKEIGEDILGLRLLCLYGLKGAAAYMEHARVLGQQDDEVGAEFHQIMMFLGTEPTEMQPLIDCAMQIGQMNFKVMALLDKGETETFGHPEPTRVNMKPVAGKAILVSGHDLHDLEKILQQTEGKGINVFTNGEMLPAHAYPAFKKYPHLVGNYGSAWQNQQKEFAAFPGAVVMTSNCIINPNVGKYADRIYTRSIVGWPGVTHIEGDDFSTVIEKALSLDGFPYDEIPHYTMTGFARNALMAAAPAVIDQVKAGNIKHFFLIGGCDGDKQERGYYTEMAKAVPQDSLILTLACGKFKFNDLEFGDINGIPRLLDVGQCNDAYSAIQLALALAEAFECGVNDLPLSLVLSWFEQKAIVILLTLLSLGVKGIRVGPSVPGFLTPNLLNFLNETFDLRPITTVEQDLKDILAA.

4 residues coordinate [2Fe-2S] cluster: Cys3, Cys6, Cys18, and Cys25. Residues His252, Glu276, Cys320, Cys408, Cys436, Cys461, Glu495, and Lys497 each coordinate hybrid [4Fe-2O-2S] cluster. Position 408 is a cysteine persulfide (Cys408).

It belongs to the HCP family. Requires [2Fe-2S] cluster as cofactor. The cofactor is hybrid [4Fe-2O-2S] cluster.

It localises to the cytoplasm. The enzyme catalyses A + NH4(+) + H2O = hydroxylamine + AH2 + H(+). Its function is as follows. Catalyzes the reduction of hydroxylamine to form NH(3) and H(2)O. The protein is Hydroxylamine reductase of Tolumonas auensis (strain DSM 9187 / NBRC 110442 / TA 4).